Consider the following 298-residue polypeptide: HTH-type transcriptional regulator ArgP (298 aa).

The HTH lysR-type domain maps to 4–60 (LDYKWIEALDAVVAQGGFERAAEELYISQSAVSQRIKQLERFLAQSVLIREQPPKPT). Positions 21–40 (FERAAEELYISQSAVSQRIK) form a DNA-binding region, H-T-H motif.

The protein belongs to the LysR transcriptional regulatory family. As to quaternary structure, homodimer.

Controls the transcription of genes involved in arginine and lysine metabolism. The chain is HTH-type transcriptional regulator ArgP from Vibrio vulnificus (strain YJ016).